A 416-amino-acid polypeptide reads, in one-letter code: MKIYLVGGAVRDSLLNLPIKDKDFMVVGATPEQMQQLGYRQVGKDFPVFLHPKTQQEYALARTERKVGLGYGGFSCYASPDVTLEQDLLRRDLTINAIAQDEAGNLYDPYHGIADINARQLRHVSAAFAEDPLRVLRVARFAARFHDLGFEIAAETMALMQHMSQTEELTALTPERVWQEVDKSLGGPHPEVFFEVLRQCGALNILFPEIEALFGVPQPEKWHPEIDTGLHTMLVLAQASSLTEEKAVRFAALVHDLGKALSPKEHWPKHHGHGQKGLPVIKSLCERLRIPNEYRDLALLVSDQHQNVHQAFELRSETIIKLFDKADFWRKPERLEQLLLACIADMRGRTGFEHHAYPQGDYLSACFSAASSVDVKAIIAAGFQGAQIKQALNSKRIEVVEQVKLNWQQSQTKQTP.

Gly8 and Arg11 together coordinate ATP. Residues Gly8 and Arg11 each coordinate CTP. Positions 21 and 23 each coordinate Mg(2+). Residues Arg91, Arg137, and Arg140 each contribute to the ATP site. CTP contacts are provided by Arg91, Arg137, and Arg140. The 102-residue stretch at 228–329 (TGLHTMLVLA…IKLFDKADFW (102 aa)) folds into the HD domain.

The protein belongs to the tRNA nucleotidyltransferase/poly(A) polymerase family. Bacterial CCA-adding enzyme type 1 subfamily. As to quaternary structure, monomer. Can also form homodimers and oligomers. Mg(2+) is required as a cofactor. Requires Ni(2+) as cofactor.

It catalyses the reaction a tRNA precursor + 2 CTP + ATP = a tRNA with a 3' CCA end + 3 diphosphate. It carries out the reaction a tRNA with a 3' CCA end + 2 CTP + ATP = a tRNA with a 3' CCACCA end + 3 diphosphate. Catalyzes the addition and repair of the essential 3'-terminal CCA sequence in tRNAs without using a nucleic acid template. Adds these three nucleotides in the order of C, C, and A to the tRNA nucleotide-73, using CTP and ATP as substrates and producing inorganic pyrophosphate. tRNA 3'-terminal CCA addition is required both for tRNA processing and repair. Also involved in tRNA surveillance by mediating tandem CCA addition to generate a CCACCA at the 3' terminus of unstable tRNAs. While stable tRNAs receive only 3'-terminal CCA, unstable tRNAs are marked with CCACCA and rapidly degraded. The polypeptide is Multifunctional CCA protein (Shewanella sp. (strain ANA-3)).